The primary structure comprises 348 residues: Putative 4-hydroxythreonine-4-phosphate dehydrogenase 2 (348 aa).

A divalent metal cation is bound by residues H180, H224, and H279.

It belongs to the PdxA family. As to quaternary structure, homodimer. Requires Zn(2+) as cofactor. The cofactor is Mg(2+). Co(2+) serves as cofactor.

The protein localises to the cytoplasm. It carries out the reaction 4-(phosphooxy)-L-threonine + NAD(+) = 3-amino-2-oxopropyl phosphate + CO2 + NADH. It participates in cofactor biosynthesis; pyridoxine 5'-phosphate biosynthesis; pyridoxine 5'-phosphate from D-erythrose 4-phosphate: step 4/5. Its function is as follows. Catalyzes the NAD(P)-dependent oxidation of 4-(phosphooxy)-L-threonine (HTP) into 2-amino-3-oxo-4-(phosphooxy)butyric acid which spontaneously decarboxylates to form 3-amino-2-oxopropyl phosphate (AHAP). This chain is Putative 4-hydroxythreonine-4-phosphate dehydrogenase 2, found in Rhizobium meliloti (strain 1021) (Ensifer meliloti).